A 346-amino-acid polypeptide reads, in one-letter code: Holliday junction branch migration complex subunit RuvB (346 aa).

A large ATPase domain (RuvB-L) region spans residues methionine 1–tyrosine 182. Residues leucine 21, arginine 22, glycine 63, lysine 66, threonine 67, threonine 68, glutamate 129–phenylalanine 131, arginine 172, tyrosine 182, and arginine 219 contribute to the ATP site. Threonine 67 contacts Mg(2+). The small ATPAse domain (RuvB-S) stretch occupies residues threonine 183–leucine 253. The segment at asparagine 256 to asparagine 346 is head domain (RuvB-H). DNA is bound by residues arginine 292, arginine 311, and arginine 316.

It belongs to the RuvB family. As to quaternary structure, homohexamer. Forms an RuvA(8)-RuvB(12)-Holliday junction (HJ) complex. HJ DNA is sandwiched between 2 RuvA tetramers; dsDNA enters through RuvA and exits via RuvB. An RuvB hexamer assembles on each DNA strand where it exits the tetramer. Each RuvB hexamer is contacted by two RuvA subunits (via domain III) on 2 adjacent RuvB subunits; this complex drives branch migration. In the full resolvosome a probable DNA-RuvA(4)-RuvB(12)-RuvC(2) complex forms which resolves the HJ.

The protein localises to the cytoplasm. It carries out the reaction ATP + H2O = ADP + phosphate + H(+). Its function is as follows. The RuvA-RuvB-RuvC complex processes Holliday junction (HJ) DNA during genetic recombination and DNA repair, while the RuvA-RuvB complex plays an important role in the rescue of blocked DNA replication forks via replication fork reversal (RFR). RuvA specifically binds to HJ cruciform DNA, conferring on it an open structure. The RuvB hexamer acts as an ATP-dependent pump, pulling dsDNA into and through the RuvAB complex. RuvB forms 2 homohexamers on either side of HJ DNA bound by 1 or 2 RuvA tetramers; 4 subunits per hexamer contact DNA at a time. Coordinated motions by a converter formed by DNA-disengaged RuvB subunits stimulates ATP hydrolysis and nucleotide exchange. Immobilization of the converter enables RuvB to convert the ATP-contained energy into a lever motion, pulling 2 nucleotides of DNA out of the RuvA tetramer per ATP hydrolyzed, thus driving DNA branch migration. The RuvB motors rotate together with the DNA substrate, which together with the progressing nucleotide cycle form the mechanistic basis for DNA recombination by continuous HJ branch migration. Branch migration allows RuvC to scan DNA until it finds its consensus sequence, where it cleaves and resolves cruciform DNA. This Rhizobium leguminosarum bv. trifolii (strain WSM2304) protein is Holliday junction branch migration complex subunit RuvB.